A 342-amino-acid chain; its full sequence is N-acetyl-gamma-glutamyl-phosphate reductase (342 aa).

Cys-149 is an active-site residue.

The protein belongs to the NAGSA dehydrogenase family. Type 1 subfamily.

It localises to the cytoplasm. It carries out the reaction N-acetyl-L-glutamate 5-semialdehyde + phosphate + NADP(+) = N-acetyl-L-glutamyl 5-phosphate + NADPH + H(+). The protein operates within amino-acid biosynthesis; L-arginine biosynthesis; N(2)-acetyl-L-ornithine from L-glutamate: step 3/4. Catalyzes the NADPH-dependent reduction of N-acetyl-5-glutamyl phosphate to yield N-acetyl-L-glutamate 5-semialdehyde. This is N-acetyl-gamma-glutamyl-phosphate reductase from Thiobacillus denitrificans (strain ATCC 25259 / T1).